Consider the following 253-residue polypeptide: MGTILDKIVDQKKKEVAALYETYTPVKEKRKTRSLVKALEQFTVIAEVKRASPSKGDINLHVDVRKQVKAYEECGAGAVSVLTDGQFFKGSFYDLQTAREESSIPLLCKDFIIDKIQIDRAYEAGADIILLIVAALTKEKLKELYSYVLEKGLEAIVEVHDEQELEIAIQFNPHVIGINNRNLKTFEVDLSQTEKLGKRLNEEKLLWISESGVHSKEDMIRVKRAGAKGVLVGEALMTSSSIHTFFEDCKVNI.

This sequence belongs to the TrpC family.

The catalysed reaction is 1-(2-carboxyphenylamino)-1-deoxy-D-ribulose 5-phosphate + H(+) = (1S,2R)-1-C-(indol-3-yl)glycerol 3-phosphate + CO2 + H2O. Its pathway is amino-acid biosynthesis; L-tryptophan biosynthesis; L-tryptophan from chorismate: step 4/5. In Bacillus cereus (strain AH187), this protein is Indole-3-glycerol phosphate synthase.